The following is a 418-amino-acid chain: Ras association domain-containing protein 5 (418 aa).

The interval 1 to 118 is disordered; that stretch reads MAMASPAIGQ…QPQDPRVPAE (118 aa). Ala2 is modified (N-acetylthreonine). The span at 77–89 shows a compositional bias: low complexity; that stretch reads SRPARPLRPGLQQ. The Phorbol-ester/DAG-type zinc finger occupies 122–170; it reads GHCFAELVLPGGPGWCDLCGREVLRQALRCTNCKFTCHPECRSLIQLDC. Residues Ser182 and Ser279 each carry the phosphoserine modification. A Ras-associating domain is found at 274 to 364; it reads TDKRTSFYLP…LSFVLKENET (91 aa). Thr352 bears the Phosphothreonine mark. In terms of domain architecture, SARAH spans 366 to 413; that stretch reads EVEWDAFSIPELQNFLTILEKEEQDKIQQVQKKYDKFRQKLEEALRES.

In terms of assembly, interacts directly with activated HRAS; a RASSF5-STK4/MST1 complex probably associates with activated HRAS. Interacts with KRAS. Probably interacts with Ras-like GTPases RRAS, MRAS, RAP1B, RAP2A and RALA. Interacts with RRAS2. Can self-associate. Interacts with RSSF1 isoform A. The RSSF1 isoform A-RSSF5 heterodimer probably mediates the association of RSSF1 with HRAS. Isoform 2 interacts with activated RAP1A and ITGAL/LFA-1. Binds STK4/MST1, inhibiting STK4/MST1 autoactivation. In terms of tissue distribution, widely expressed. Frequently down-regulated in lung tumor cell lines and primary lung tumors.

It is found in the cytoplasm. Its subcellular location is the cytoskeleton. In terms of biological role, potential tumor suppressor. Seems to be involved in lymphocyte adhesion by linking RAP1A activation upon T-cell receptor or chemokine stimulation to integrin activation. Isoform 2 stimulates lymphocyte polarization and the patch-like distribution of ITGAL/LFA-1, resulting in an enhanced adhesion to ICAM1. Together with RAP1A may participate in regulation of microtubule growth. The association of isoform 2 with activated RAP1A is required for directional movement of endothelial cells during wound healing. May be involved in regulation of Ras apoptotic function. The RASSF5-STK4/MST1 complex may mediate HRAS and KRAS induced apoptosis. The sequence is that of Ras association domain-containing protein 5 (RASSF5) from Homo sapiens (Human).